Reading from the N-terminus, the 364-residue chain is MPENSSIPNCCEASGLAARPSWSGSAGARPPVTARAPWVAPMLSTVVVVTTAVDFVGNLLVILSVLRNRKLRNAGNLFVVSLALADLVIALYPYPLILVAIIRDGWVLGEAHCKASAFVMGLSVIGSVFNITAIAINRYCCICHSTTYHRVCSHWYTPIYISLVWLLTLVALVPNFFVGSLEYDPRIYSCTFIQTASTQYTAAVVAIHFLLPMAVVSFCYLRIWVLVLQARRKAKATRKLRLRPSDLRSFLTMFAVFVVFAICWAPLNCIGLAVAINPEAMALQVPEGLFVTSYFLAYFNSCLNAIVYGLLNQNFRREYKRILLAIWNTRRCIQHASKHCLTEERQGPTPPAARATVPVKEGAL.

Residues 1 to 42 are Extracellular-facing; sequence MPENSSIPNCCEASGLAARPSWSGSAGARPPVTARAPWVAPM. N-linked (GlcNAc...) asparagine glycosylation is present at asparagine 4. The helical transmembrane segment at 43–63 threads the bilayer; it reads LSTVVVVTTAVDFVGNLLVIL. The Cytoplasmic portion of the chain corresponds to 64–76; that stretch reads SVLRNRKLRNAGN. The helical transmembrane segment at 77-97 threads the bilayer; the sequence is LFVVSLALADLVIALYPYPLI. Topologically, residues 98-115 are extracellular; it reads LVAIIRDGWVLGEAHCKA. Cysteine 113 and cysteine 190 are disulfide-bonded. A helical transmembrane segment spans residues 116 to 136; sequence SAFVMGLSVIGSVFNITAIAI. At 137–155 the chain is on the cytoplasmic side; it reads NRYCCICHSTTYHRVCSHW. A helical membrane pass occupies residues 156–176; sequence YTPIYISLVWLLTLVALVPNF. Topologically, residues 177-200 are extracellular; the sequence is FVGSLEYDPRIYSCTFIQTASTQY. A helical membrane pass occupies residues 201–221; it reads TAAVVAIHFLLPMAVVSFCYL. The Cytoplasmic segment spans residues 222–253; it reads RIWVLVLQARRKAKATRKLRLRPSDLRSFLTM. Residues 254–274 form a helical membrane-spanning segment; the sequence is FAVFVVFAICWAPLNCIGLAV. The Extracellular segment spans residues 275–287; that stretch reads AINPEAMALQVPE. A helical transmembrane segment spans residues 288–308; sequence GLFVTSYFLAYFNSCLNAIVY. The Cytoplasmic portion of the chain corresponds to 309 to 364; sequence GLLNQNFRREYKRILLAIWNTRRCIQHASKHCLTEERQGPTPPAARATVPVKEGAL. The interval 343–364 is disordered; it reads EERQGPTPPAARATVPVKEGAL. A compositionally biased stretch (low complexity) spans 352–364; it reads AARATVPVKEGAL.

Belongs to the G-protein coupled receptor 1 family.

It is found in the cell membrane. Functionally, high affinity receptor for melatonin. The activity of this receptor is mediated by pertussis toxin sensitive G proteins that inhibits adenylate cyclase activity. The protein is Melatonin receptor type 1B (Mtnr1b) of Mus musculus (Mouse).